Reading from the N-terminus, the 512-residue chain is Cobyric acid synthase (512 aa).

The GATase cobBQ-type domain maps to 251 to 451; the sequence is ALDIAVIRLP…IHGLFDSHHF (201 aa). The active-site Nucleophile is Cys332. Residue His443 is part of the active site.

This sequence belongs to the CobB/CobQ family. CobQ subfamily.

It functions in the pathway cofactor biosynthesis; adenosylcobalamin biosynthesis. Catalyzes amidations at positions B, D, E, and G on adenosylcobyrinic A,C-diamide. NH(2) groups are provided by glutamine, and one molecule of ATP is hydrogenolyzed for each amidation. This chain is Cobyric acid synthase, found in Yersinia enterocolitica serotype O:8 / biotype 1B (strain NCTC 13174 / 8081).